Reading from the N-terminus, the 101-residue chain is Small ribosomal subunit protein bS18c (101 aa).

Belongs to the bacterial ribosomal protein bS18 family. As to quaternary structure, part of the 30S ribosomal subunit.

The protein resides in the plastid. It localises to the chloroplast. This is Small ribosomal subunit protein bS18c from Gossypium barbadense (Sea Island cotton).